Here is a 166-residue protein sequence, read N- to C-terminus: Lipoprotein signal peptidase (166 aa).

The next 3 helical transmembrane spans lie at 12–32 (WLWVVVAVLIIDLGSKFLILQ), 70–90 (WFFSGIAIGICVVLTVLMYRS), and 102–122 (ALIIGGALGNLFDRLWHGFVV). Active-site residues include Asp123 and Asp141. Residues 137-157 (FNLADSAICIGAALIVLEGFL) traverse the membrane as a helical segment.

It belongs to the peptidase A8 family.

The protein localises to the cell inner membrane. It catalyses the reaction Release of signal peptides from bacterial membrane prolipoproteins. Hydrolyzes -Xaa-Yaa-Zaa-|-(S,diacylglyceryl)Cys-, in which Xaa is hydrophobic (preferably Leu), and Yaa (Ala or Ser) and Zaa (Gly or Ala) have small, neutral side chains.. Its pathway is protein modification; lipoprotein biosynthesis (signal peptide cleavage). This protein specifically catalyzes the removal of signal peptides from prolipoproteins. The protein is Lipoprotein signal peptidase of Klebsiella pneumoniae (strain 342).